The primary structure comprises 401 residues: Acetate kinase (401 aa).

Asn7 contacts Mg(2+). Residue Lys14 participates in ATP binding. Arg91 lines the substrate pocket. Asp148 (proton donor/acceptor) is an active-site residue. ATP-binding positions include 208–212 (HLGNG), 283–285 (DFR), and 331–335 (GVGEN). Glu384 is a binding site for Mg(2+).

This sequence belongs to the acetokinase family. Homodimer. It depends on Mg(2+) as a cofactor. Mn(2+) serves as cofactor.

Its subcellular location is the cytoplasm. The enzyme catalyses acetate + ATP = acetyl phosphate + ADP. Its pathway is metabolic intermediate biosynthesis; acetyl-CoA biosynthesis; acetyl-CoA from acetate: step 1/2. In terms of biological role, catalyzes the formation of acetyl phosphate from acetate and ATP. Can also catalyze the reverse reaction. The protein is Acetate kinase of Helicobacter hepaticus (strain ATCC 51449 / 3B1).